The primary structure comprises 120 residues: Large ribosomal subunit protein uL22 (120 aa).

The disordered stretch occupies residues 1 to 20 (MFVNRRYTARGKNLPSSPKK).

It belongs to the universal ribosomal protein uL22 family. Part of the 50S ribosomal subunit.

In terms of biological role, this protein binds specifically to 23S rRNA; its binding is stimulated by other ribosomal proteins, e.g. L4, L17, and L20. It is important during the early stages of 50S assembly. It makes multiple contacts with different domains of the 23S rRNA in the assembled 50S subunit and ribosome. The globular domain of the protein is located near the polypeptide exit tunnel on the outside of the subunit, while an extended beta-hairpin is found that lines the wall of the exit tunnel in the center of the 70S ribosome. The chain is Large ribosomal subunit protein uL22 from Borrelia turicatae (strain 91E135).